The following is an 82-amino-acid chain: uncharacterized protein (82 aa).

The tract at residues 1-20 (MMNLSPPFKSPSGSSRAGRR) is disordered.

This is an uncharacterized protein from Archaeoglobus fulgidus (strain ATCC 49558 / DSM 4304 / JCM 9628 / NBRC 100126 / VC-16).